The chain runs to 1141 residues: DNA-directed RNA polymerase subunit beta (1141 aa).

The protein belongs to the RNA polymerase beta chain family. In terms of assembly, the RNAP catalytic core consists of 2 alpha, 1 beta, 1 beta' and 1 omega subunit. When a sigma factor is associated with the core the holoenzyme is formed, which can initiate transcription.

It carries out the reaction RNA(n) + a ribonucleoside 5'-triphosphate = RNA(n+1) + diphosphate. In terms of biological role, DNA-dependent RNA polymerase catalyzes the transcription of DNA into RNA using the four ribonucleoside triphosphates as substrates. The polypeptide is DNA-directed RNA polymerase subunit beta (Parafrankia sp. (strain EAN1pec)).